The following is a 288-amino-acid chain: Bifunctional protein FolD (288 aa).

Residues 164 to 166 and I230 contribute to the NADP(+) site; that span reads GTS.

The protein belongs to the tetrahydrofolate dehydrogenase/cyclohydrolase family. Homodimer.

The catalysed reaction is (6R)-5,10-methylene-5,6,7,8-tetrahydrofolate + NADP(+) = (6R)-5,10-methenyltetrahydrofolate + NADPH. The enzyme catalyses (6R)-5,10-methenyltetrahydrofolate + H2O = (6R)-10-formyltetrahydrofolate + H(+). The protein operates within one-carbon metabolism; tetrahydrofolate interconversion. In terms of biological role, catalyzes the oxidation of 5,10-methylenetetrahydrofolate to 5,10-methenyltetrahydrofolate and then the hydrolysis of 5,10-methenyltetrahydrofolate to 10-formyltetrahydrofolate. The protein is Bifunctional protein FolD of Mycoplasma mycoides subsp. mycoides SC (strain CCUG 32753 / NCTC 10114 / PG1).